The primary structure comprises 338 residues: Mitoferrin-1 (338 aa).

The tract at residues 1–37 (MELRRGGVGSQAAGRRMDGDCRDGGCGSKDAGSEDYE) is disordered. Solcar repeat units follow at residues 43-131 (ASVS…MKRT), 141-225 (NSHL…LQEQ), and 232-326 (YNPQ…FKYF). 6 helical membrane-spanning segments follow: residues 45-64 (VSTHMTAGAMAGILEHSIMY), 106-125 (GLNVMMMGAGPAHAMYFACY), 143-162 (HLANGIAGSMATLLHDAVMN), 200-219 (SYTTQLTMNIPFQSIHFITY), 234-253 (PQSHIISGGLAGALAAAATT), and 301-320 (GIQARVIYQMPSTAISWSVY).

Belongs to the mitochondrial carrier (TC 2.A.29) family. In terms of assembly, interacts with ACB10; this interaction stabilizes SLC25A37 and enhances the function of SLC25A37 to import mitochondrial iron during erythroid differentiation.

The protein resides in the mitochondrion inner membrane. The enzyme catalyses Fe(2+)(in) = Fe(2+)(out). Functionally, mitochondrial iron transporter that specifically mediates iron uptake in developing erythroid cells, thereby playing an essential role in heme biosynthesis. This chain is Mitoferrin-1 (Slc25a37), found in Rattus norvegicus (Rat).